The sequence spans 244 residues: MFKMELGQLLGWDAYFYSIFAQAMNMEEFTVVALRALRELRFDFFAYGMCSVTPFMRPKTYMYGNYPEHWLQRYQAANYALIDPTVKHSKVSSAPILWSNELFRNCPDLWSEANDSSLCHGLAQPSFNTQGRVGVLSLARKDNAISLQEFEALKPVTKAFAAAALEKISALETDVRAFNTDVEFSERECDVLRWTADGKTSEEIGVIMGVCTDTVNYHHRNIQRKIGASNRVQAVSYAVALGYI.

An HTH luxR-type domain is found at 177-242 (AFNTDVEFSE…QAVSYAVALG (66 aa)). The segment at residues 201–220 (SEEIGVIMGVCTDTVNYHHR) is a DNA-binding region (H-T-H motif).

Belongs to the autoinducer-regulated transcriptional regulatory protein family.

In terms of biological role, positive regulator of phenazine antibiotic production. May activate the phenazine biosynthetic genes by binding to a DNA sequence upstream of them, or to an intermediate gene which, in turn, interacts with them. In Pseudomonas fluorescens, this protein is Transcriptional activator protein PhzR (phzR).